Consider the following 1159-residue polypeptide: MFLKQPGGCILLQFLGLLGLVGAVTRTYYIGIVEEYWNYVPQGKDVITGKSFSEDKLATLFLERGPNRIGGIYKKAVYRHFTDGSYSTEIPKPPWLGFLGPILRAEVGDVIVIHLMNFASRPFSLHPHGVFYDKDSEGALYPDGTSGRNKEDDMVPPGKNYTYVWPVREEYAPAPADANCLTWVYHSHIDAPKDICSGLIGPLLVCKEGVLNRYSGMRTDVDREFVIMFTLVDENQSWYLDDNIKQFCTNPNSVDKSDAVFQRSNKMHALNGFLFGNMPEPEMCVGESVSWHLFGMGNEIDIHSIYFYGNTFITRGHRADVVNLFPATFLTTEMIVENPGKWMITCQVSDHLQAGMLGQYSVGNCRGNAPHPKVQGQQRRYFIAAEKVLWDYGPQGYDKFTGFPLNTSGSDSAVYFTQADNRIGGKYWKARYTEYVDATFSRRKMPSDSEAHLGILGPVIKAEVGDILLVTFANKADKVYSILPHGVFYDKASDAAPNVDGFLKPGAHVKPGETFTYRWTVPESVSPTDEDPPCLTYLYFSAVQPIKDTSAGLVGPLLVCKKGTLNADGTQKGIDKEFYLLFTVFDENFSSYLDENIKKFTWHPFSVDKEDKEFVKSNRMHAVNGYMYGSQPGLSMCKKDRVSWHLIGMGTDTDMHGVYFQGNTIHLRGTHRDSLALFPHMATTAYMQPDHSGIFKVFCSTLPHFTRGMGQIYEISSCGNRDPSEPPYGMLRTFFIAAEEVEWDYAPNKNWEFEKQHLDAGGERHGDIFMNHTENWIGSQYRKVVYREYTNGEFVEIKARPPQEEHLQLLGPMIHAEVGDSILIIFKNKASRPYSIAAQGVEDSNNGKLLNVPVTKPGEIKTYRWNVPKRSGPGPSDPNCIPWVYFSTANFVKDTYSGLMGPLITCREGVLNEKGRRSDVDYEFALLFLVFNENESWYLDDNIKKYLNKDPRDFKHTDDFEESNKMHAINGKIFGNLPGLIMTEDSMTNWYLLGIGSEVDIHTIHYHAESFLFKIDKSYREDVYDLFPGTFQTIELFADHPGTWLLHCHVSDHIHAGMETTYTVLRNIDNRIPYSTKTPSGAGSHAVTVPSQEQPGKEELYFFGKNLRPRGAKAALVILFILGLLLLVATVVLALRLRSSRRQMAYREVQSCALPTDAL.

The first 23 residues, 1-23 (MFLKQPGGCILLQFLGLLGLVGA), serve as a signal peptide directing secretion. Plastocyanin-like domains lie at 24-206 (VTRT…LLVC), 217-365 (MRTD…VGNC), 378-560 (QRRY…LLVC), 570-718 (TQKG…ISSC), 730-906 (MLRT…LITC), and 914-1092 (KGRR…VPSQ). Residues 24-1114 (VTRTYYIGIV…KNLRPRGAKA (1091 aa)) lie on the Extracellular side of the membrane. The Cu cation site is built by histidine 126 and histidine 128. A glycan (N-linked (GlcNAc...) asparagine) is linked at asparagine 160. A disulfide bond links cysteine 180 and cysteine 206. Cu cation-binding residues include histidine 186 and histidine 188. Asparagine 235 carries an N-linked (GlcNAc...) asparagine glycan. Residues cysteine 284 and cysteine 365 are joined by a disulfide bond. Residues histidine 303, cysteine 346, and histidine 351 each contribute to the Cu cation site. Asparagine 406 is a glycosylation site (N-linked (GlcNAc...) asparagine). Cysteines 534 and 560 form a disulfide. A glycan (N-linked (GlcNAc...) asparagine) is linked at asparagine 588. The cysteines at positions 637 and 718 are disulfide-linked. Cu cation-binding residues include histidine 656, cysteine 699, histidine 704, and methionine 709. The N-linked (GlcNAc...) asparagine glycan is linked to asparagine 771. A disulfide bridge links cysteine 880 with cysteine 906. A glycan (N-linked (GlcNAc...) asparagine) is linked at asparagine 934. The Cu cation site is built by histidine 1002, histidine 1005, histidine 1007, histidine 1047, cysteine 1048, histidine 1049, histidine 1053, and methionine 1058. Residues 1115-1135 (ALVILFILGLLLLVATVVLAL) form a helical membrane-spanning segment. At 1136 to 1159 (RLRSSRRQMAYREVQSCALPTDAL) the chain is on the cytoplasmic side.

It belongs to the multicopper oxidase family. Requires Cu cation as cofactor.

The protein resides in the membrane. It carries out the reaction 4 Fe(2+) + O2 + 4 H(+) = 4 Fe(3+) + 2 H2O. Its function is as follows. Is a copper-binding glycoprotein with ferroxidase activity. It oxidizes Fe(2+) to Fe(3+) without releasing radical oxygen species. May be involved in the regulation of intracellular iron content. In Mus musculus (Mouse), this protein is Ferroxidase HEPHL1 (Hephl1).